Consider the following 162-residue polypeptide: Nucleotide-binding protein CHU_2278 (162 aa).

It belongs to the YajQ family.

Nucleotide-binding protein. This is Nucleotide-binding protein CHU_2278 from Cytophaga hutchinsonii (strain ATCC 33406 / DSM 1761 / CIP 103989 / NBRC 15051 / NCIMB 9469 / D465).